A 480-amino-acid chain; its full sequence is Aspartyl/glutamyl-tRNA(Asn/Gln) amidotransferase subunit B (480 aa).

The protein belongs to the GatB/GatE family. GatB subfamily. As to quaternary structure, heterotrimer of A, B and C subunits.

It carries out the reaction L-glutamyl-tRNA(Gln) + L-glutamine + ATP + H2O = L-glutaminyl-tRNA(Gln) + L-glutamate + ADP + phosphate + H(+). It catalyses the reaction L-aspartyl-tRNA(Asn) + L-glutamine + ATP + H2O = L-asparaginyl-tRNA(Asn) + L-glutamate + ADP + phosphate + 2 H(+). Allows the formation of correctly charged Asn-tRNA(Asn) or Gln-tRNA(Gln) through the transamidation of misacylated Asp-tRNA(Asn) or Glu-tRNA(Gln) in organisms which lack either or both of asparaginyl-tRNA or glutaminyl-tRNA synthetases. The reaction takes place in the presence of glutamine and ATP through an activated phospho-Asp-tRNA(Asn) or phospho-Glu-tRNA(Gln). The chain is Aspartyl/glutamyl-tRNA(Asn/Gln) amidotransferase subunit B from Streptococcus pneumoniae (strain Hungary19A-6).